We begin with the raw amino-acid sequence, 544 residues long: Chaperonin GroEL (544 aa).

Residues 29 to 32, lysine 50, 86 to 90, glycine 415, and aspartate 495 each bind ATP; these read TLGP and DGTTT.

This sequence belongs to the chaperonin (HSP60) family. In terms of assembly, forms a cylinder of 14 subunits composed of two heptameric rings stacked back-to-back. Interacts with the co-chaperonin GroES.

It localises to the cytoplasm. The catalysed reaction is ATP + H2O + a folded polypeptide = ADP + phosphate + an unfolded polypeptide.. Functionally, together with its co-chaperonin GroES, plays an essential role in assisting protein folding. The GroEL-GroES system forms a nano-cage that allows encapsulation of the non-native substrate proteins and provides a physical environment optimized to promote and accelerate protein folding. The sequence is that of Chaperonin GroEL from Tannerella forsythia (Bacteroides forsythus).